We begin with the raw amino-acid sequence, 40 residues long: Lucifensin (40 aa).

3 disulfide bridges follow: C3–C30, C16–C36, and C20–C38.

The protein belongs to the invertebrate defensin family. Type 1 subfamily. The disulfide bonds are essential for antimicrobial activity. As to expression, larval fat body, hemolymph and salivary glands (at protein level).

The protein resides in the secreted. Shows strong antibacterial activity against the Gram-positive bacterium M.luteus. Also shows antibacterial activity against the Gram-positive bacteria E.fecalis, S.aureus, S.carnosus, S.pneumoniae and S.pyogenes and against a number of methicillin-resistant S.aureus and glycopeptide-intermediate S.aureus isolates. Does not show antibacterial activity against Gram-negative bacteria or antifungal activity against C.utilis. Shows slight antifungal activity against C.albicans. The sequence is that of Lucifensin from Lucilia cuprina (Green bottle fly).